The primary structure comprises 791 residues: Putative inactive tyrosine-protein kinase Wsck (791 aa).

Residues 1–26 form the signal peptide; the sequence is MECGSHSGHRPIPIWLSSCLVAMCLG. The Extracellular portion of the chain corresponds to 27 to 401; sequence LPLGAAVPQE…YATFEKGQSS (375 aa). The 87-residue stretch at 39–125 folds into the WSC domain; the sequence is AYYYVGCYTA…VGVHSYYSTI (87 aa). The 116-residue stretch at 131–246 folds into the Fibronectin type-III domain; sequence GPHHLRISNK…ASIEATTEVG (116 aa). Residues Asn-139, Asn-217, and Asn-329 are each glycosylated (N-linked (GlcNAc...) asparagine). A helical transmembrane segment spans residues 402–422; it reads VVALAVTCVIFGSCLLLSLIA. Topologically, residues 423-791 are cytoplasmic; that stretch reads YFYLRYKTCR…PQLEAVATMG (369 aa). The Protein kinase domain occupies 493-758; sequence LNVNDVIGDG…DVAFGVRQLM (266 aa). 499–507 contributes to the ATP binding site; the sequence is IGDGRFGEI.

Belongs to the protein kinase superfamily. Tyr protein kinase family.

It is found in the membrane. Its function is as follows. Probably lacks tyrosine-protein kinase activity. This is Putative inactive tyrosine-protein kinase Wsck from Drosophila melanogaster (Fruit fly).